The primary structure comprises 1066 residues: DNA-directed RNA polymerase subunit beta (1066 aa).

Belongs to the RNA polymerase beta chain family. As to quaternary structure, in plastids the minimal PEP RNA polymerase catalytic core is composed of four subunits: alpha, beta, beta', and beta''. When a (nuclear-encoded) sigma factor is associated with the core the holoenzyme is formed, which can initiate transcription.

The protein resides in the plastid. It localises to the chloroplast. It catalyses the reaction RNA(n) + a ribonucleoside 5'-triphosphate = RNA(n+1) + diphosphate. In terms of biological role, DNA-dependent RNA polymerase catalyzes the transcription of DNA into RNA using the four ribonucleoside triphosphates as substrates. The chain is DNA-directed RNA polymerase subunit beta from Psilotum nudum (Whisk fern).